The sequence spans 252 residues: Movement protein (252 aa).

Positions 222-252 (YDGPYRPATTRPKSLLSSEDVKRASNKKNSS) are disordered.

The protein belongs to the tobamovirus movement protein family.

Functionally, transports viral genome to neighboring plant cells directly through plasmosdesmata, without any budding. The movement protein allows efficient cell to cell propagation, by bypassing the host cell wall barrier. Displays RNA-binding activity. The sequence is that of Movement protein from Bidens pilosa (Hairy beggarticks).